The primary structure comprises 677 residues: Methionine--tRNA ligase (677 aa).

Residues Pro-15–His-25 carry the 'HIGH' region motif. Zn(2+)-binding residues include Cys-146, Cys-149, Cys-159, and Cys-162. The 'KMSKS' region signature appears at Lys-333–Ser-337. Lys-336 provides a ligand contact to ATP. One can recognise a tRNA-binding domain in the interval Asp-575–Lys-677.

This sequence belongs to the class-I aminoacyl-tRNA synthetase family. MetG type 1 subfamily. As to quaternary structure, homodimer. Zn(2+) is required as a cofactor.

The protein resides in the cytoplasm. The enzyme catalyses tRNA(Met) + L-methionine + ATP = L-methionyl-tRNA(Met) + AMP + diphosphate. Functionally, is required not only for elongation of protein synthesis but also for the initiation of all mRNA translation through initiator tRNA(fMet) aminoacylation. The polypeptide is Methionine--tRNA ligase (Escherichia coli (strain SE11)).